Here is a 208-residue protein sequence, read N- to C-terminus: UPF0637 protein Bcer98_2662 (208 aa).

It belongs to the UPF0637 family.

The protein is UPF0637 protein Bcer98_2662 of Bacillus cytotoxicus (strain DSM 22905 / CIP 110041 / 391-98 / NVH 391-98).